A 109-amino-acid chain; its full sequence is MKTLLLAVAVVAFVCLGSADQLGLGRQQIDWGQGQAVGPPYTLCFECNRMTSSDCSTALRCYRGSCYTLYRPDENCELKWAVKGCAETCPTAGPNERVKCCRSPRCNDD.

An N-terminal signal peptide occupies residues 1 to 19 (MKTLLLAVAVVAFVCLGSA). The propeptide occupies 20 to 34 (DQLGLGRQQIDWGQG). A Pyrrolidone carboxylic acid modification is found at Gln-35. 5 cysteine pairs are disulfide-bonded: Cys-44–Cys-66, Cys-47–Cys-55, Cys-61–Cys-85, Cys-89–Cys-100, and Cys-101–Cys-106.

Belongs to the three-finger toxin family. Ancestral subfamily. Boigatoxin sub-subfamily. As to quaternary structure, heterodimer of A and B chains; disulfide-linked. In terms of tissue distribution, expressed by the venom gland.

Its subcellular location is the secreted. Functionally, this bird and reptile-specific postsynaptic neurotoxin inhibits the chick muscle alpha-1-beta-1-gamma-delta (CHRNA1-CHRNB1-CHRNG-CHNRD) nicotinic acetylcholine receptor (nAChR) 100-fold more compared with the mouse receptor. In vivo, produces rapid flaccid paralysis, dyspnea and increased respiratory rate in geckos. At sublethal doses geckos were immobilized for up to three days and then recovered. Chicks injected with lethal doses showed rapid onset of inactivity, dyspnea and neck droop, and no extended paralysis with survival was seen. The polypeptide is Irditoxin subunit A (Boiga irregularis (Brown tree snake)).